Consider the following 239-residue polypeptide: ATP synthase subunit a (239 aa).

5 helical membrane-spanning segments follow: residues 27–47 (GQVF…VVLG), 86–106 (LPFI…GALI), 125–145 (INTT…AGLS), 190–210 (LAVA…VMLL), and 211–231 (GLFT…FYIG).

The protein belongs to the ATPase A chain family. As to quaternary structure, F-type ATPases have 2 components, CF(1) - the catalytic core - and CF(0) - the membrane proton channel. CF(1) has five subunits: alpha(3), beta(3), gamma(1), delta(1), epsilon(1). CF(0) has four main subunits: a, b, b' and c.

It localises to the cellular thylakoid membrane. Its function is as follows. Key component of the proton channel; it plays a direct role in the translocation of protons across the membrane. In Synechococcus sp. (strain RCC307), this protein is ATP synthase subunit a.